The sequence spans 103 residues: Large ribosomal subunit protein bL21 (103 aa).

The protein belongs to the bacterial ribosomal protein bL21 family. Part of the 50S ribosomal subunit. Contacts protein L20.

Functionally, this protein binds to 23S rRNA in the presence of protein L20. The sequence is that of Large ribosomal subunit protein bL21 from Shewanella sp. (strain ANA-3).